The chain runs to 762 residues: uncharacterized protein (762 aa).

The MCM domain occupies isoleucine 334–leucine 542. Threonine 384–serine 391 contributes to the ATP binding site.

The protein belongs to the MCM family.

This is an uncharacterized protein from Methanocaldococcus jannaschii (strain ATCC 43067 / DSM 2661 / JAL-1 / JCM 10045 / NBRC 100440) (Methanococcus jannaschii).